We begin with the raw amino-acid sequence, 1363 residues long: Spike glycoprotein (1363 aa).

An N-terminal signal peptide occupies residues 1-13; that stretch reads MFLILLISLPMAF. Residues 14–1307 lie on the Extracellular side of the membrane; it reads AVIGDLKCTT…GTYEYYVKWP (1294 aa). Residues 15–298 form the BetaCoV S1-NTD domain; that stretch reads VIGDLKCTTV…DFMSEIKCKT (284 aa). 5 disulfide bridges follow: cysteine 21/cysteine 165, cysteine 160/cysteine 193, cysteine 172/cysteine 252, cysteine 286/cysteine 296, and cysteine 331/cysteine 356. Asparagine 59 and asparagine 133 each carry an N-linked (GlcNAc...) asparagine; by host glycan. N-linked (GlcNAc...) asparagine; by host glycosylation occurs at asparagine 198. In terms of domain architecture, BetaCoV S1-CTD spans 329–617; that stretch reads PDCNIEAWLN…DVNSGTTCST (289 aa). A glycan (N-linked (GlcNAc...) asparagine; by host) is linked at asparagine 359. 2 disulfide bridges follow: cysteine 374-cysteine 427 and cysteine 386-cysteine 615. Residues asparagine 437, asparagine 649, asparagine 676, asparagine 696, asparagine 714, asparagine 739, and asparagine 788 are each glycosylated (N-linked (GlcNAc...) asparagine; by host). 2 fusion peptide regions span residues 914-935 and 933-953; these read SAIE…VEAY and EAYN…VQSY. The N-linked (GlcNAc...) asparagine; by host glycan is linked to asparagine 937. An intrachain disulfide couples cysteine 938 to cysteine 949. The tract at residues 1014–1064 is heptad repeat 1; sequence QKLIANAFNNALDAIQEGFDATNSALVKIQAVVNANAEALNNLLQQLSNRF. The stretch at 1043–1087 forms a coiled coil; sequence QAVVNANAEALNNLLQQLSNRFGAISSSLQEILSRLDALEAQAQI. Asparagine 1194, asparagine 1224, asparagine 1234, asparagine 1253, asparagine 1267, and asparagine 1288 each carry an N-linked (GlcNAc...) asparagine; by host glycan. The tract at residues 1258-1296 is heptad repeat 2; that stretch reads APDLSLDYINVTFLDLQDEMNRLQEAIKVLNQSYINLKD. A coiled-coil region spans residues 1269–1297; sequence TFLDLQDEMNRLQEAIKVLNQSYINLKDI. Residues 1308–1328 form a helical membrane-spanning segment; it reads WYVWLLIGFAGVAMLVLLFFI. Over 1329–1363 the chain is Cytoplasmic; the sequence is CCCTGCGTSCFKICGGCCDDYTGHQELVIKTSHDD. Positions 1359–1363 match the KxHxx motif; sequence TSHDD.

The protein belongs to the betacoronaviruses spike protein family. In terms of assembly, homotrimer; each monomer consists of a S1 and a S2 subunit. The resulting peplomers protrude from the virus surface as spikes. Post-translationally, specific enzymatic cleavages in vivo yield mature proteins. The precursor is processed into S1 and S2 by host cell furin or another cellular protease to yield the mature S1 and S2 proteins. Additionally, a second cleavage leads to the release of a fusion peptide after viral attachment to host cell receptor. The cytoplasmic Cys-rich domain is palmitoylated. Spike glycoprotein is digested within host endosomes.

Its subcellular location is the virion membrane. The protein resides in the host endoplasmic reticulum-Golgi intermediate compartment membrane. It is found in the host cell membrane. Its function is as follows. Attaches the virion to the cell membrane by interacting with host receptor, initiating the infection. In terms of biological role, mediates fusion of the virion and cellular membranes by acting as a class I viral fusion protein. Under the current model, the protein has at least three conformational states: pre-fusion native state, pre-hairpin intermediate state, and post-fusion hairpin state. During viral and target cell membrane fusion, the coiled coil regions (heptad repeats) assume a trimer-of-hairpins structure, positioning the fusion peptide in close proximity to the C-terminal region of the ectodomain. The formation of this structure appears to drive apposition and subsequent fusion of viral and target cell membranes. Acts as a viral fusion peptide which is unmasked following S2 cleavage occurring upon virus endocytosis. This is Spike glycoprotein from Bos taurus (Bovine).